We begin with the raw amino-acid sequence, 218 residues long: Adenylate kinase (218 aa).

10 to 15 contributes to the ATP binding site; it reads GAGKGT. The NMP stretch occupies residues 30–59; the sequence is STGDMLRAAVKAGTPLGQQAKAVMDAGKLV. Residues T31, R36, 57-59, 85-88, and Q92 contribute to the AMP site; these read KLV and GFPR. Positions 122 to 159 are LID; the sequence is GRRSHPASGRTYHVKFNPPKVEGKDDVTGEDLIQREDD. Residues R123 and 132–133 each bind ATP; that span reads TY. The segment at 127–147 is disordered; it reads PASGRTYHVKFNPPKVEGKDD. AMP contacts are provided by R156 and R167. ATP is bound at residue G203.

This sequence belongs to the adenylate kinase family. In terms of assembly, monomer.

The protein localises to the cytoplasm. It catalyses the reaction AMP + ATP = 2 ADP. The protein operates within purine metabolism; AMP biosynthesis via salvage pathway; AMP from ADP: step 1/1. Its function is as follows. Catalyzes the reversible transfer of the terminal phosphate group between ATP and AMP. Plays an important role in cellular energy homeostasis and in adenine nucleotide metabolism. This is Adenylate kinase from Paracidovorax citrulli (strain AAC00-1) (Acidovorax citrulli).